A 240-amino-acid polypeptide reads, in one-letter code: Rho GDP-dissociation inhibitor 1 (240 aa).

Positions 1–66 (MSLVSGARDM…DDDSKLQLGP (66 aa)) are disordered.

This sequence belongs to the Rho GDI family. As to quaternary structure, interacts with RAC-like GTP binding proteins ARAC5/ROP4 and ARAC3/ROP6.

The protein resides in the cytoplasm. In terms of biological role, regulates the GDP/GTP exchange reaction of the Rho proteins by inhibiting the dissociation of GDP from them, and the subsequent binding of GTP to them. The chain is Rho GDP-dissociation inhibitor 1 (GDI1) from Arabidopsis thaliana (Mouse-ear cress).